A 275-amino-acid polypeptide reads, in one-letter code: Probable 2' cyclic ADP-D-ribose synthase TcpB (275 aa).

Positions 17 to 32 (RLKADDSREMSKEKQA) are enriched in basic and acidic residues. The segment at 17–66 (RLKADDSREMSKEKQAQSKAHKAQQAISSAKSLSTQKSKMSELERATRDG) is disordered. Over residues 39 to 48 (AQQAISSAKS) the composition is skewed to low complexity. Residues 55–64 (KMSELERATR) show a composition bias toward basic and acidic residues. One can recognise a TIR domain in the interval 142–275 (EEYDFFISHA…EIAKELHSLI (134 aa)). Residues 151-152 (AS) and Lys-181 each bind NAD(+). The active site involves Glu-217.

Homodimer. Interacts with host TIRAP, and probably host MYD88. Interacts with host TLR4, abolishes the interaction of host TIRAP with TLR4.

The protein resides in the secreted. It localises to the host cell membrane. It catalyses the reaction NAD(+) + H2O = ADP-D-ribose + nicotinamide + H(+). The catalysed reaction is NAD(+) = 2'cADPR + nicotinamide + H(+). Virulence factor that interferes with host Toll-like receptor 2 (TLR2) and TLR4 signaling, resulting in the reduction of dendritic cell maturation, inhibition of pro-inflammatory cytokine secretion and impaired NF-kappa-B activation in macrophages. Binds host lipids. Has NAD(+) hydrolase (NADase) activity, catalyzes cleavage of NAD(+) into ADP-D-ribose (ADPR) and nicotinamide, also generates a cyclization variant of cyclic ADPR (cADPR), termed v-cADPR (probably 2'cADPR). This is Probable 2' cyclic ADP-D-ribose synthase TcpB (tcpB) from Brucella melitensis biotype 2 (strain ATCC 23457).